Here is a 452-residue protein sequence, read N- to C-terminus: Phosphoglucosamine mutase (452 aa).

Ser-104 (phosphoserine intermediate) is an active-site residue. Ser-104, Asp-245, Asp-247, and Asp-249 together coordinate Mg(2+). Ser-104 is subject to Phosphoserine.

The protein belongs to the phosphohexose mutase family. Mg(2+) is required as a cofactor. In terms of processing, activated by phosphorylation.

It carries out the reaction alpha-D-glucosamine 1-phosphate = D-glucosamine 6-phosphate. Its function is as follows. Catalyzes the conversion of glucosamine-6-phosphate to glucosamine-1-phosphate. In Gluconacetobacter diazotrophicus (strain ATCC 49037 / DSM 5601 / CCUG 37298 / CIP 103539 / LMG 7603 / PAl5), this protein is Phosphoglucosamine mutase.